We begin with the raw amino-acid sequence, 260 residues long: Indole-3-glycerol phosphate synthase (260 aa).

Belongs to the TrpC family.

It carries out the reaction 1-(2-carboxyphenylamino)-1-deoxy-D-ribulose 5-phosphate + H(+) = (1S,2R)-1-C-(indol-3-yl)glycerol 3-phosphate + CO2 + H2O. It participates in amino-acid biosynthesis; L-tryptophan biosynthesis; L-tryptophan from chorismate: step 4/5. This Thermoanaerobacter sp. (strain X514) protein is Indole-3-glycerol phosphate synthase.